We begin with the raw amino-acid sequence, 508 residues long: Phytepsin (508 aa).

Positions 1 to 27 (MGTRGLALALLAAVLLLQTVLPAASEA) are cleaved as a signal peptide. Positions 28–66 (EGLVRIALKKRPIDRNSRVATGLSGGEEQPLLSGANPLR) are cleaved as a propeptide — activation peptide. In terms of domain architecture, Peptidase A1 spans 84-505 (YFGEIGVGTP…DYGKLRIGFA (422 aa)). Aspartate 102 is a catalytic residue. Disulfide bonds link cysteine 115–cysteine 121 and cysteine 280–cysteine 284. Residue aspartate 289 is part of the active site. The 106-residue stretch at 314-419 (VVSQECKTIV…NQLCNRLPSP (106 aa)) folds into the Saposin B-type domain. 4 disulfides stabilise this stretch: cysteine 319–cysteine 413, cysteine 344–cysteine 385, cysteine 350–cysteine 382, and cysteine 427–cysteine 464. Residue asparagine 399 is glycosylated (N-linked (GlcNAc...) asparagine).

The protein belongs to the peptidase A1 family. In terms of assembly, heterodimer of two subunits (29 kDa and 11 kDa) processed from the precursor molecule. A large enzyme (32 kDa and 16 kDa) is an intermediate precursor form. In terms of tissue distribution, embryo and leaf.

The protein localises to the vacuole. It carries out the reaction Prefers hydrophobic residues Phe, Val, Ile, Leu, and Ala at P1 and P1', but also cleaves -Phe-|-Asp- and -Asp-|-Asp- bonds in 2S albumin from plant seeds.. In terms of biological role, involved in the breakdown of propeptides of storage proteins in protein-storage vacuoles. The protein is Phytepsin of Hordeum vulgare (Barley).